We begin with the raw amino-acid sequence, 241 residues long: Interleukin-6 (241 aa).

Residues 1–25 (MNFTEGCEATGRRPGSAGSRRRRAP) are disordered. Residues 1–46 (MNFTEGCEATGRRPGSAGSRRRRAPRPGPVALLPLLLPLLLPPAAA) form the signal peptide. C122 and C132 are oxidised to a cystine.

The protein belongs to the IL-6 superfamily. In terms of assembly, component of a hexamer of two molecules each of IL6, IL6R and IL6ST; first binds to IL6R to associate with the signaling subunit IL6ST.

The protein resides in the secreted. In terms of biological role, cytokine with a wide variety of biological functions in immunity, tissue regeneration, and metabolism. Binds to IL6R, then the complex associates to the signaling subunit IL6ST/gp130 to trigger the intracellular IL6-signaling pathway. The interaction with the membrane-bound IL6R and IL6ST stimulates 'classic signaling', whereas the binding of IL6 and soluble IL6R to IL6ST stimulates 'trans-signaling'. Alternatively, 'cluster signaling' occurs when membrane-bound IL6:IL6R complexes on transmitter cells activate IL6ST receptors on neighboring receiver cells. This Gallus gallus (Chicken) protein is Interleukin-6 (IL6).